We begin with the raw amino-acid sequence, 413 residues long: Transmembrane protein 237B (413 aa).

A disordered region spans residues 1 to 162; sequence MDPEAKVSSS…EDDDVITDPQ (162 aa). Residues 112–122 show a composition bias toward polar residues; that stretch reads DLVSNGDTLDQ. 4 helical membrane-spanning segments follow: residues 233–253, 274–294, 312–332, and 360–380; these read VIGLFSHGFLAGYAVWNIIVV, LAYPAQSLLYLLLALSTVSAF, LSPVALASVFYFSALVLSLSQ, and ILYPWITVNLVVSLLVGLAWI.

It belongs to the TMEM237 family.

The protein localises to the membrane. The protein resides in the cell projection. Its subcellular location is the cilium. In terms of biological role, component of the transition zone in primary cilia. Required for ciliogenesis. This is Transmembrane protein 237B (tmem237b) from Danio rerio (Zebrafish).